The primary structure comprises 942 residues: Inter-alpha-trypsin inhibitor heavy chain H5 (942 aa).

A signal peptide spans 1–16 (MLLLLGLCLGLSLCVG). The VIT domain maps to 35–161 (VPRQVRLLQR…KAAFFLSYEE (127 aa)). N-linked (GlcNAc...) asparagine glycosylation is found at Asn97 and Asn127. Disordered stretches follow at residues 116-136 (KKSGDRVKEKRNKTTEENGEK) and 208-227 (SRQRGSGRGEDDSGPPPSTV). Asn231, Asn421, and Asn508 each carry an N-linked (GlcNAc...) asparagine glycan. One can recognise a VWFA domain in the interval 295–478 (NVVFVLDSSA…SQLIGFYDEI (184 aa)). The interval 550-571 (QKAGKDVTGSPRPGGDGEGDTN) is disordered. N-linked (GlcNAc...) asparagine glycans are attached at residues Asn776, Asn795, and Asn862.

It belongs to the ITIH family. As to expression, abundantly expressed in placenta. Less abundant expression in mammary gland and ovary. Expression is barely detectable levels in all other tissues tested.

It localises to the secreted. May act as a tumor suppressor. The polypeptide is Inter-alpha-trypsin inhibitor heavy chain H5 (ITIH5) (Homo sapiens (Human)).